Reading from the N-terminus, the 380-residue chain is Apelin receptor (380 aa).

Over 1–30 (MEEGGDFDNYYGADNQSECEYTDWKSSGAL) the chain is Extracellular. The N-linked (GlcNAc...) asparagine glycan is linked to N15. 2 cysteine pairs are disulfide-bonded: C19-C281 and C102-C181. Residues 31-54 (IPAIYMLVFLLGTTGNGLVLWTVF) traverse the membrane as a helical segment. Residues 55–64 (RSSREKRRSA) lie on the Cytoplasmic side of the membrane. The chain crosses the membrane as a helical span at residues 65-86 (DIFIASLAVADLTFVVTLPLWA). Residues 87 to 99 (TYTYRDYDWPFGT) are Extracellular-facing. Residues 100-125 (FSCKLSSYLIFVNMYASVFCLTGLSF) form a helical membrane-spanning segment. Residues 126 to 146 (DRYLAIVRPVANARLRLRVSG) are Cytoplasmic-facing. The helical transmembrane segment at 147 to 164 (AVATAVLWVLAALLAMPV) threads the bilayer. Topologically, residues 165 to 198 (MVFRTTGDLENTTKVQCYMDYSMVATVSSDWAWE) are extracellular. N-linked (GlcNAc...) asparagine glycosylation occurs at N175. The helical transmembrane segment at 199 to 223 (VGLGVSSTTVGFVVPFTIMLTCYFF) threads the bilayer. The Cytoplasmic portion of the chain corresponds to 224 to 246 (IAQTIAGHFRKERIEGLRKRRRL). A helical membrane pass occupies residues 247-270 (LSIIVVLVVTFALCWMPYHLVKTL). Topologically, residues 271 to 289 (YMLGSLLHWPCDFDLFLMN) are extracellular. A helical transmembrane segment spans residues 290-312 (VFPYCTCISYVNSCLNPFLYAFF). The Cytoplasmic segment spans residues 313–380 (DPRFRQACTS…PYSQETLVVD (68 aa)). Residues 342-351 (KSASYSSGHS) show a composition bias toward low complexity. The tract at residues 342–380 (KSASYSSGHSQGPGPNMGKGGEQMHEKSIPYSQETLVVD) is disordered. The span at 371-380 (PYSQETLVVD) shows a compositional bias: polar residues.

The protein belongs to the G-protein coupled receptor 1 family. As to quaternary structure, homodimer; dimerization inhibits APLNR-mediated G protein and beta-arrestin signaling pathways compared to monomeric APLNR.

It is found in the cell membrane. Functionally, g protein-coupled receptor for peptide hormones apelin (APLN) and apelin receptor early endogenous ligand (APELA/ELA), that plays a role in the regulation of normal cardiovascular function and fluid homeostasis. When acting as apelin receptor, activates both G(i) protein pathway that inhibits adenylate cyclase activity, and the beta-arrestin pathway that promotes internalization of the receptor. APLNR/APJ also functions as mechanoreceptor that is activated by pathological stimuli in a G-protein-independent fashion to induce beta-arrestin signaling, hence eliciting cardiac hypertrophy. However, the presence of apelin ligand blunts cardiac hypertrophic induction from APLNR/APJ on response to pathological stimuli. Plays a key role in early development such as gastrulation, blood vessels formation and heart morphogenesis by acting as a APELA receptor. May promote angioblast migration toward the embryonic midline, i.e. the position of the future vessel formation, during vasculogenesis. Promotes sinus venosus (SV)-derived endothelial cells migration into the developing heart to promote coronary blood vessel development. Also plays a role in various processes in adults such as regulation of blood vessel formation, blood pressure, heart contractility and heart failure. In terms of biological role, (Microbial infection) Alternative coreceptor with CD4 for HIV-1 infection; may be involved in the development of AIDS dementia. The polypeptide is Apelin receptor (APLNR) (Macaca mulatta (Rhesus macaque)).